Reading from the N-terminus, the 116-residue chain is Ribosome-binding factor A (116 aa).

This sequence belongs to the RbfA family. Monomer. Binds 30S ribosomal subunits, but not 50S ribosomal subunits or 70S ribosomes.

The protein resides in the cytoplasm. In terms of biological role, one of several proteins that assist in the late maturation steps of the functional core of the 30S ribosomal subunit. Associates with free 30S ribosomal subunits (but not with 30S subunits that are part of 70S ribosomes or polysomes). Required for efficient processing of 16S rRNA. May interact with the 5'-terminal helix region of 16S rRNA. The sequence is that of Ribosome-binding factor A from Clostridium perfringens (strain 13 / Type A).